A 186-amino-acid chain; its full sequence is Ribosome maturation factor RimM (186 aa).

The 72-residue stretch at 103–174 folds into the PRC barrel domain; sequence PEEYHYSDLI…ELQVQPPPGL (72 aa).

This sequence belongs to the RimM family. Binds ribosomal protein uS19.

It localises to the cytoplasm. In terms of biological role, an accessory protein needed during the final step in the assembly of 30S ribosomal subunit, possibly for assembly of the head region. Essential for efficient processing of 16S rRNA. May be needed both before and after RbfA during the maturation of 16S rRNA. It has affinity for free ribosomal 30S subunits but not for 70S ribosomes. The sequence is that of Ribosome maturation factor RimM from Synechococcus sp. (strain JA-3-3Ab) (Cyanobacteria bacterium Yellowstone A-Prime).